Reading from the N-terminus, the 157-residue chain is MIRVGQGFDVHQFAEGRLLIIGGVEIPYEKGLLGHSDADVLLHTIADAALGAIGEGDIGKHFPDTDPHFKDADSAKLLSAVWELVKEKGYTLGNVDCTIIAQKPKMAPHIPAMRARIAELLEAEEAQVNVKATTTETLGFTGRGEGIASQAVILLVK.

Residues Asp-9 and His-11 each contribute to the a divalent metal cation site. Residues Asp-9–His-11 and His-35–Ser-36 contribute to the 4-CDP-2-C-methyl-D-erythritol 2-phosphate site. Residue His-43 participates in a divalent metal cation binding. 4-CDP-2-C-methyl-D-erythritol 2-phosphate contacts are provided by residues Asp-57 to Gly-59, Phe-62 to Asp-66, Ala-101 to Ala-107, Thr-133 to Glu-136, Phe-140, and Arg-143.

It belongs to the IspF family. In terms of assembly, homotrimer. A divalent metal cation serves as cofactor.

It carries out the reaction 4-CDP-2-C-methyl-D-erythritol 2-phosphate = 2-C-methyl-D-erythritol 2,4-cyclic diphosphate + CMP. Its pathway is isoprenoid biosynthesis; isopentenyl diphosphate biosynthesis via DXP pathway; isopentenyl diphosphate from 1-deoxy-D-xylulose 5-phosphate: step 4/6. In terms of biological role, involved in the biosynthesis of isopentenyl diphosphate (IPP) and dimethylallyl diphosphate (DMAPP), two major building blocks of isoprenoid compounds. Catalyzes the conversion of 4-diphosphocytidyl-2-C-methyl-D-erythritol 2-phosphate (CDP-ME2P) to 2-C-methyl-D-erythritol 2,4-cyclodiphosphate (ME-CPP) with a corresponding release of cytidine 5-monophosphate (CMP). In Halalkalibacterium halodurans (strain ATCC BAA-125 / DSM 18197 / FERM 7344 / JCM 9153 / C-125) (Bacillus halodurans), this protein is 2-C-methyl-D-erythritol 2,4-cyclodiphosphate synthase.